Reading from the N-terminus, the 315-residue chain is MFYQVLHSILSLTAVLLNAFTMYLAITKSPKIMRPCSAIITIKTATDILTSIMSFFVMQRIITDGSTILVIPTGPCINFGKTACYVGHMLMLCFLEYNLIWMISSYIFRYYILYVRQPSIKKLVFVAFCLSIPSIIHMVVWFSIYDPNEASTYLPLFGSCDMVLSGKIVYWSAITLITQLFITAFLVIVAYIWIKETLCSYATKMGAIKKDVKNFNKRLVKVINFQVFLPSFIFLGVITFASMFTGKIGYEYAQYAISVIFMFSPIISPFSYILFVPHYKNVITGKVKNPKSKPTKCNPPISTTRSTGAPFVYNI.

7 helical membrane-spanning segments follow: residues 6–26 (LHSI…YLAI), 38–58 (AIIT…FFVM), 83–103 (ACYV…IWMI), 124–144 (VFVA…WFSI), 174–194 (ITLI…YIWI), 225–245 (FQVF…SMFT), and 256–276 (AISV…ILFV).

Belongs to the nematode receptor-like protein srd family.

The protein resides in the membrane. The protein is Serpentine receptor class delta-31 (srd-31) of Caenorhabditis elegans.